A 473-amino-acid polypeptide reads, in one-letter code: MKTLYSLRRFYPVETLFNGTLTLAGRDQETTGFAWWAGNARLINLSGKLLGAHVAHAGLIVFWAGAMNLFEVAHFVPEKPMYEQGLILLPHLATLGWGVGPGGEVIDTFPYFVSGVLHLISSAVLGFGGIYHALLGPETLEESFPFFGYVWKDRNKMTTILGIHLILLGIGAFLLVFKALYFGGVYDTWAPGGGDVRKITNVTLSPSIIFGCLLKSPFGGEGWIVSVDDLEDIIGGHVWIGVICILGGIWHILTKPFAWARRALVWSGEAYLSYSLAALSVFGFIACCFVWFNNTAYPSEFYGPTGPEASQAQAFTFLVRDQRLGANVGSAQGPTGLGKYLMRSPTGEVIFGGETMRFWDLRAPWLEPLRGPNGLDLSRLKKDIQPWQERRSAEYMTHAPLGSLNSVGGVATEINAVNYVSPRSWLSTSHFVLGFFLFVGHLWHAGRARAAAAGFEKGIDRDFEPVLSMTPLN.

Residues M1–E14 constitute a propeptide that is removed on maturation. Position 15 is an N-acetylthreonine (T15). T15 bears the Phosphothreonine mark. 5 consecutive transmembrane segments (helical) span residues L69–A93, L134–N155, K178–T200, K255–S275, and W291–A312. A [CaMn4O5] cluster-binding site is contributed by E367. A propeptide spanning residues L426–N473 is cleaved from the precursor. Residues R447 to P471 form a helical membrane-spanning segment.

This sequence belongs to the PsbB/PsbC family. PsbC subfamily. As to quaternary structure, PSII is composed of 1 copy each of membrane proteins PsbA, PsbB, PsbC, PsbD, PsbE, PsbF, PsbH, PsbI, PsbJ, PsbK, PsbL, PsbM, PsbT, PsbX, PsbY, PsbZ, Psb30/Ycf12, at least 3 peripheral proteins of the oxygen-evolving complex and a large number of cofactors. It forms dimeric complexes. It depends on Binds multiple chlorophylls and provides some of the ligands for the Ca-4Mn-5O cluster of the oxygen-evolving complex. It may also provide a ligand for a Cl- that is required for oxygen evolution. PSII binds additional chlorophylls, carotenoids and specific lipids. as a cofactor. In terms of processing, over time a tryptophan in the fifth lumenal loop is converted to 2-hydroxy-2,3-dihydrotryptophan, 2-oxo-2,3-dihydrotryptophan, and kynurenine by oxidizing species from the active site. This oxidation targets the protein for turnover.

It is found in the plastid. The protein localises to the chloroplast thylakoid membrane. Functionally, one of the components of the core complex of photosystem II (PSII). It binds chlorophyll and helps catalyze the primary light-induced photochemical processes of PSII. PSII is a light-driven water:plastoquinone oxidoreductase, using light energy to abstract electrons from H(2)O, generating O(2) and a proton gradient subsequently used for ATP formation. The chain is Photosystem II CP43 reaction center protein from Spinacia oleracea (Spinach).